A 130-amino-acid polypeptide reads, in one-letter code: Putative pre-16S rRNA nuclease (130 aa).

The protein belongs to the YqgF nuclease family.

It localises to the cytoplasm. In terms of biological role, could be a nuclease involved in processing of the 5'-end of pre-16S rRNA. The sequence is that of Putative pre-16S rRNA nuclease from Sulfurimonas denitrificans (strain ATCC 33889 / DSM 1251) (Thiomicrospira denitrificans (strain ATCC 33889 / DSM 1251)).